We begin with the raw amino-acid sequence, 734 residues long: Photosystem I P700 chlorophyll a apoprotein A2 (734 aa).

The next 8 membrane-spanning stretches (helical) occupy residues 46–69 (IFAS…FHVA), 135–158 (LYTG…LHLQ), 175–199 (LNHH…HVAI), 273–291 (IAHH…GHMY), 330–353 (IHFQ…QHMY), 369–395 (AALY…IFFI), 417–439 (AIKS…LYVH), and 517–535 (FLVH…LILV). [4Fe-4S] cluster is bound by residues Cys-559 and Cys-568. The next 2 helical transmembrane spans lie at 575–596 (AFYL…YWHW) and 643–665 (LSVW…MFLI). Chlorophyll a is bound by residues His-654, Met-662, and Tyr-670. Residue Trp-671 participates in phylloquinone binding. Residues 707–727 (LVGLAHFSVGYIFTYAAFLIA) form a helical membrane-spanning segment.

The protein belongs to the PsaA/PsaB family. The PsaA/B heterodimer binds the P700 chlorophyll special pair and subsequent electron acceptors. PSI consists of a core antenna complex that captures photons, and an electron transfer chain that converts photonic excitation into a charge separation. The eukaryotic PSI reaction center is composed of at least 11 subunits. The cofactor is P700 is a chlorophyll a/chlorophyll a' dimer, A0 is one or more chlorophyll a, A1 is one or both phylloquinones and FX is a shared 4Fe-4S iron-sulfur center..

Its subcellular location is the plastid. It localises to the chloroplast thylakoid membrane. The enzyme catalyses reduced [plastocyanin] + hnu + oxidized [2Fe-2S]-[ferredoxin] = oxidized [plastocyanin] + reduced [2Fe-2S]-[ferredoxin]. Functionally, psaA and PsaB bind P700, the primary electron donor of photosystem I (PSI), as well as the electron acceptors A0, A1 and FX. PSI is a plastocyanin-ferredoxin oxidoreductase, converting photonic excitation into a charge separation, which transfers an electron from the donor P700 chlorophyll pair to the spectroscopically characterized acceptors A0, A1, FX, FA and FB in turn. Oxidized P700 is reduced on the lumenal side of the thylakoid membrane by plastocyanin. This is Photosystem I P700 chlorophyll a apoprotein A2 from Illicium oligandrum (Star anise).